Consider the following 145-residue polypeptide: Transcriptional regulator MraZ (145 aa).

2 consecutive SpoVT-AbrB domains span residues Thr5–Glu49 and Thr78–Val121.

The protein belongs to the MraZ family. As to quaternary structure, forms oligomers.

The protein resides in the cytoplasm. It localises to the nucleoid. The chain is Transcriptional regulator MraZ from Ureaplasma urealyticum serovar 10 (strain ATCC 33699 / Western).